Reading from the N-terminus, the 479-residue chain is Poly(A) polymerase catalytic subunit (479 aa).

Residues aspartate 202 and aspartate 204 contribute to the active site. 3 residues coordinate Ca(2+): aspartate 202, aspartate 204, and aspartate 253.

The protein belongs to the poxviridae poly(A) polymerase catalytic subunit family. As to quaternary structure, heterodimer of a large (catalytic) subunit and a small (regulatory) subunit.

The enzyme catalyses RNA(n) + ATP = RNA(n)-3'-adenine ribonucleotide + diphosphate. Polymerase that creates the 3'-poly(A) tail of mRNA's. This is Poly(A) polymerase catalytic subunit (OPG063) from Cowpox virus (strain GRI-90 / Grishak) (CPV).